The primary structure comprises 255 residues: Probable ubiquitin carboxyl-terminal hydrolase (255 aa).

A UCH catalytic domain is found at 13 to 237 (NWIPLEANPE…IRFNLMGLVK (225 aa)). Positions 16-21 (PLEANP) are interaction with ubiquitin. The Nucleophile role is filled by Cys-103. His-177 functions as the Proton donor in the catalytic mechanism. Residues 227 to 232 (EIRFNL) form an interaction with ubiquitin region. Residues 235 to 255 (LVKKPNEESEEEEEKEKEETK) are disordered. Positions 242–255 (ESEEEEEKEKEETK) are enriched in acidic residues.

It belongs to the peptidase C12 family.

The protein resides in the cytoplasm. The catalysed reaction is Thiol-dependent hydrolysis of ester, thioester, amide, peptide and isopeptide bonds formed by the C-terminal Gly of ubiquitin (a 76-residue protein attached to proteins as an intracellular targeting signal).. Its function is as follows. Ubiquitin-protein hydrolase is involved both in the processing of ubiquitin precursors and of ubiquitinated proteins. This enzyme is a thiol protease that recognizes and hydrolyzes a peptide bond at the C-terminal glycine of either ubiquitin or nedd8. The chain is Probable ubiquitin carboxyl-terminal hydrolase (uch1) from Dictyostelium discoideum (Social amoeba).